The sequence spans 255 residues: 5-oxoprolinase subunit A (255 aa).

Belongs to the LamB/PxpA family. Forms a complex composed of PxpA, PxpB and PxpC.

The enzyme catalyses 5-oxo-L-proline + ATP + 2 H2O = L-glutamate + ADP + phosphate + H(+). Catalyzes the cleavage of 5-oxoproline to form L-glutamate coupled to the hydrolysis of ATP to ADP and inorganic phosphate. In Rhodopseudomonas palustris (strain BisB18), this protein is 5-oxoprolinase subunit A.